A 369-amino-acid chain; its full sequence is Sesquiterpene cyclase hepA (369 aa).

Residues aspartate 100, asparagine 248, serine 252, and aspartate 256 each contribute to the Mg(2+) site. The DDXXD motif motif lies at 100-104; the sequence is DDEID. The short motif at 255–262 is the (N,D)D(L,I,V)X(S,T)XXXE motif element; that stretch reads NDLLSLRK.

This sequence belongs to the terpene synthase family. Mg(2+) serves as cofactor.

In terms of biological role, sesquiterpene cyclase; part of the gene cluster that mediates the biosynthesis of heptelidic acid (HA), a sesquiterpene lactone that acts as an inhibitor of glyceraldehyde-3-phosphatedehydrogenase (GAPDH) and a growth inhibitor of the salt-tolerant lactic acid bacteria in soy sauce brewing. The polypeptide is Sesquiterpene cyclase hepA (Aspergillus oryzae (strain ATCC 42149 / RIB 40) (Yellow koji mold)).